A 356-amino-acid chain; its full sequence is PEP-dependent dihydroxyacetone kinase, dihydroxyacetone-binding subunit DhaK (356 aa).

Positions 7–352 (DVQDVLDEQL…WDAPVHTPAL (346 aa)) constitute a DhaK domain. Dihydroxyacetone is bound by residues 53–56 (GSGH), Lys104, and Asp109. The active-site Proton acceptor is the His56. The active-site Tele-hemiaminal-histidine intermediate is the His218.

In terms of assembly, homodimer. The dihydroxyacetone kinase complex is composed of a homodimer of DhaM, a homodimer of DhaK and the subunit DhaL. DhaL also forms a complex with DhaR.

It carries out the reaction dihydroxyacetone + phosphoenolpyruvate = dihydroxyacetone phosphate + pyruvate. It participates in polyol metabolism; glycerol degradation. With respect to regulation, inhibited by chloro-3-hydroxyacetone and D,L-glyceraldehyde. Functionally, dihydroxyacetone binding subunit of the dihydroxyacetone kinase, which is responsible for the phosphoenolpyruvate (PEP)-dependent phosphorylation of dihydroxyacetone via a phosphoryl group transfer from DhaL-ATP. Binds covalently dihydroxyacetone in hemiaminal linkage. DhaK also acts as corepressor of the transcription activator DhaR by binding to the sensor domain of DhaR. In the presence of dihydroxyacetone, DhaL-ADP displaces DhaK and stimulates DhaR activity. In the absence of dihydroxyacetone, DhaL-ADP is converted by the PTS to DhaL-ATP, which does not bind to DhaR. This Escherichia coli (strain K12) protein is PEP-dependent dihydroxyacetone kinase, dihydroxyacetone-binding subunit DhaK.